Here is a 254-residue protein sequence, read N- to C-terminus: Ribonuclease HII (254 aa).

The region spanning 70–254 (RYICGIDEVG…ASFIKNLTSC (185 aa)) is the RNase H type-2 domain. A divalent metal cation is bound by residues aspartate 76, glutamate 77, and aspartate 168.

Belongs to the RNase HII family. Mn(2+) serves as cofactor. Requires Mg(2+) as cofactor.

Its subcellular location is the cytoplasm. It carries out the reaction Endonucleolytic cleavage to 5'-phosphomonoester.. In terms of biological role, endonuclease that specifically degrades the RNA of RNA-DNA hybrids. This chain is Ribonuclease HII, found in Lachnoclostridium phytofermentans (strain ATCC 700394 / DSM 18823 / ISDg) (Clostridium phytofermentans).